The following is a 170-amino-acid chain: Shikimate kinase (170 aa).

11-16 provides a ligand contact to ATP; that stretch reads LSGKST. Ser-15 contributes to the Mg(2+) binding site. Substrate contacts are provided by Asp-33, Arg-57, and Gly-79. Arg-119 is an ATP binding site. Substrate is bound at residue Arg-137.

The protein belongs to the shikimate kinase family. As to quaternary structure, monomer. Mg(2+) serves as cofactor.

The protein localises to the cytoplasm. The enzyme catalyses shikimate + ATP = 3-phosphoshikimate + ADP + H(+). Its pathway is metabolic intermediate biosynthesis; chorismate biosynthesis; chorismate from D-erythrose 4-phosphate and phosphoenolpyruvate: step 5/7. Its function is as follows. Catalyzes the specific phosphorylation of the 3-hydroxyl group of shikimic acid using ATP as a cosubstrate. The chain is Shikimate kinase from Clostridium botulinum (strain Langeland / NCTC 10281 / Type F).